Consider the following 697-residue polypeptide: Phenylalanine--tRNA ligase beta subunit, chloroplastic (697 aa).

Residues 283–368 (NISRILFIDK…RIYGFDNFIS (86 aa)) enclose the B5 domain. Mg(2+) is bound by residues D346, D352, E355, and E356. Residues 609–697 (SSYPSLTRDI…IDDLLNEYKL (89 aa)) enclose the FDX-ACB domain.

This sequence belongs to the phenylalanyl-tRNA synthetase beta subunit family. Type 1 subfamily. As to quaternary structure, tetramer of two alpha and two beta subunits. It depends on Mg(2+) as a cofactor.

The protein localises to the plastid. The protein resides in the chloroplast. It carries out the reaction tRNA(Phe) + L-phenylalanine + ATP = L-phenylalanyl-tRNA(Phe) + AMP + diphosphate + H(+). This chain is Phenylalanine--tRNA ligase beta subunit, chloroplastic, found in Gracilaria tenuistipitata var. liui (Red alga).